The primary structure comprises 374 residues: UDP-N-acetylglucosamine--N-acetylmuramyl-(pentapeptide) pyrophosphoryl-undecaprenol N-acetylglucosamine transferase (374 aa).

UDP-N-acetyl-alpha-D-glucosamine contacts are provided by residues 14 to 16, asparagine 125, arginine 168, serine 196, and glutamine 297; that span reads TGG.

Belongs to the glycosyltransferase 28 family. MurG subfamily.

The protein localises to the cell inner membrane. The enzyme catalyses di-trans,octa-cis-undecaprenyl diphospho-N-acetyl-alpha-D-muramoyl-L-alanyl-D-glutamyl-meso-2,6-diaminopimeloyl-D-alanyl-D-alanine + UDP-N-acetyl-alpha-D-glucosamine = di-trans,octa-cis-undecaprenyl diphospho-[N-acetyl-alpha-D-glucosaminyl-(1-&gt;4)]-N-acetyl-alpha-D-muramoyl-L-alanyl-D-glutamyl-meso-2,6-diaminopimeloyl-D-alanyl-D-alanine + UDP + H(+). Its pathway is cell wall biogenesis; peptidoglycan biosynthesis. Its function is as follows. Cell wall formation. Catalyzes the transfer of a GlcNAc subunit on undecaprenyl-pyrophosphoryl-MurNAc-pentapeptide (lipid intermediate I) to form undecaprenyl-pyrophosphoryl-MurNAc-(pentapeptide)GlcNAc (lipid intermediate II). This chain is UDP-N-acetylglucosamine--N-acetylmuramyl-(pentapeptide) pyrophosphoryl-undecaprenol N-acetylglucosamine transferase, found in Rhodopseudomonas palustris (strain BisA53).